The following is a 430-amino-acid chain: 3-phosphoshikimate 1-carboxyvinyltransferase (430 aa).

Residues Lys-25, Ser-26, and Arg-30 each contribute to the 3-phosphoshikimate site. Residue Lys-25 coordinates phosphoenolpyruvate. Residues Gly-97 and Arg-125 each coordinate phosphoenolpyruvate. 4 residues coordinate 3-phosphoshikimate: Ser-170, Gln-172, Asp-318, and Lys-345. Gln-172 serves as a coordination point for phosphoenolpyruvate. Asp-318 (proton acceptor) is an active-site residue. Residues Arg-349 and Arg-391 each coordinate phosphoenolpyruvate.

It belongs to the EPSP synthase family. In terms of assembly, monomer.

It localises to the cytoplasm. The catalysed reaction is 3-phosphoshikimate + phosphoenolpyruvate = 5-O-(1-carboxyvinyl)-3-phosphoshikimate + phosphate. Its pathway is metabolic intermediate biosynthesis; chorismate biosynthesis; chorismate from D-erythrose 4-phosphate and phosphoenolpyruvate: step 6/7. Functionally, catalyzes the transfer of the enolpyruvyl moiety of phosphoenolpyruvate (PEP) to the 5-hydroxyl of shikimate-3-phosphate (S3P) to produce enolpyruvyl shikimate-3-phosphate and inorganic phosphate. In Shouchella clausii (strain KSM-K16) (Alkalihalobacillus clausii), this protein is 3-phosphoshikimate 1-carboxyvinyltransferase.